Reading from the N-terminus, the 560-residue chain is MNNNIINLIAAIILSLSIIFGWQYFVVKPEQKKQQQQIAVQKAENLKKQQLKALVEPATGIVVQEESQVQRIKIESESLTGSISLKGLRFDDLILKKYKQDLSKNSPEVRLFSPANTENAYFAEVGLVSNLSSVKLPNNDTIWNSDSEILSPEKPVHLFWVNEDGVKFLVTITVDENYLFTIEQTIVNNSDKELPVQSYGLINRKYIAVEKAVNILHQGPIGCIDENLKEYSYDDIKDKKSEKFAASKVDWIGITDKYWLSSLIPDKSSNYSSNFNYALKQGIERYQVDFISPVQIIKPGKNFSIKSRIFAGAKKVDLLDKYEKQYDIKLFDRAIDFGWFYIITKPVFYAMNFFYGYVGNFGVSILIVTVIIKLLMFTLANKSYRSMKKMKNLQPEIDRIKNLYSDDKARLNQEIMALYKKEKVNPVAGCLPILVQIPVFFSIYKVLYVTIEMRQAPFYGWIKDLSAPDPTTIFNLFGLLPFAPPSFLMIGAWPILMAITMFLQQKMSPEPADPMQAQVMKFMPLIFLFMFSSFPVGLLIYWSWNNILSIIQQYYINKFN.

The next 6 helical transmembrane spans lie at 5–25 (IINL…WQYF), 334–354 (AIDF…MNFF), 357–377 (YVGN…LLMF), 431–451 (LPIL…YVTI), 476–496 (LFGL…WPIL), and 522–542 (FMPL…LIYW).

This sequence belongs to the OXA1/ALB3/YidC family. Type 1 subfamily. As to quaternary structure, interacts with the Sec translocase complex via SecD. Specifically interacts with transmembrane segments of nascent integral membrane proteins during membrane integration.

Its subcellular location is the cell inner membrane. In terms of biological role, required for the insertion and/or proper folding and/or complex formation of integral membrane proteins into the membrane. Involved in integration of membrane proteins that insert both dependently and independently of the Sec translocase complex, as well as at least some lipoproteins. Aids folding of multispanning membrane proteins. The chain is Membrane protein insertase YidC from Rickettsia rickettsii (strain Sheila Smith).